The chain runs to 582 residues: Vesicular glutamate transporter 2 (582 aa).

The Cytoplasmic portion of the chain corresponds to 1–71 (MESVKQRILA…CTCFGLPRRY (71 aa)). The chain crosses the membrane as a helical span at residues 72–92 (IIAIMSGLGFCISFGIRCNLG). Over 93-125 (VAIVDMVNNSTIHRGGKVIKEKAKFNWDPETVG) the chain is Vesicular. N100 and N101 each carry an N-linked (GlcNAc...) asparagine glycan. A helical transmembrane segment spans residues 126-146 (MIHGSFFWGYIITQIPGGYIA). Residues 147-148 (SR) lie on the Cytoplasmic side of the membrane. Residues 149-169 (LAANRVFGAAILLTSTLNMLI) form a helical membrane-spanning segment. The Vesicular portion of the chain corresponds to 170 to 177 (PSAARVHY). A helical membrane pass occupies residues 178–198 (GCVIFVRILQGLVEGVTYPAC). The Cytoplasmic portion of the chain corresponds to 199-216 (HGIWSKWAPPLERSRLAT). Residues 217 to 237 (TSFCGSYAGAVIAMPLAGILV) traverse the membrane as a helical segment. The Vesicular portion of the chain corresponds to 238–244 (QYTGWSS). The chain crosses the membrane as a helical span at residues 245–265 (VFYVYGSFGMVWYMFWLLVSY). Residues 266–310 (ESPAKHPTITDEERRYIEESIGESANLLGAMEKFKTPWRKFFTSM) lie on the Cytoplasmic side of the membrane. The helical transmembrane segment at 311–331 (PVYAIIVANFCRSWTFYLLLI) threads the bilayer. At 332–349 (SQPAYFEEVFGFEISKVG) the chain is on the vesicular side. The chain crosses the membrane as a helical span at residues 350–370 (MLSAVPHLVMTIIVPIGGQIA). Over 371-386 (DFLRSKQILSTTTVRK) the chain is Cytoplasmic. The chain crosses the membrane as a helical span at residues 387–407 (IMNCGGFGMEATLLLVVGYSH). At 408–409 (TR) the chain is on the vesicular side. Residues 410-430 (GVAISFLVLAVGFSGFAISGF) traverse the membrane as a helical segment. The Cytoplasmic portion of the chain corresponds to 431 to 443 (NVNHLDIAPRYAS). A helical transmembrane segment spans residues 444–464 (ILMGISDGVGTLSGMVCPIIV). Residues 465-477 (GAMTKNKSREEWQ) lie on the Vesicular side of the membrane. An N-linked (GlcNAc...) asparagine glycan is attached at N470. Residues 478–498 (YVFLIAALVHYGGVIFYALFA) form a helical membrane-spanning segment. The Cytoplasmic portion of the chain corresponds to 499–582 (SGEKQPWADP…YTYKDRDDYS (84 aa)).

The protein belongs to the major facilitator superfamily. Sodium/anion cotransporter family. VGLUT subfamily. Expressed in brain. Expressed in hippocampal neurons (at protein level).

It is found in the cytoplasmic vesicle. It localises to the secretory vesicle. Its subcellular location is the synaptic vesicle membrane. The protein localises to the synapse. The protein resides in the synaptosome. It is found in the cell membrane. It catalyses the reaction L-glutamate(out) = L-glutamate(in). The enzyme catalyses K(+)(in) + H(+)(out) = K(+)(out) + H(+)(in). The catalysed reaction is 3 Na(+)(out) + phosphate(out) = 3 Na(+)(in) + phosphate(in). It carries out the reaction phosphate(in) = phosphate(out). It catalyses the reaction chloride(in) = chloride(out). Chloride channel activity is allosterically activated by lumenal H(+) and Cl(-) leading to synaptic vesicles acidification. The L-glutamate transport activity is allosterically activated by lumenal H(+) and Cl(-). The allosteric requirement for H(+) efficiently prevents non-vesicular efflux across the plasma membrane. The L-glutamate uniporter activity exhibits a biphasic dependence on chloride concentration. In terms of biological role, multifunctional transporter that transports L-glutamate as well as multiple ions such as chloride, proton, potassium, sodium and phosphate. At the synaptic vesicle membrane, mainly functions as a uniporter which transports preferentially L-glutamate but also, phosphate from the cytoplasm into synaptic vesicles at presynaptic nerve terminals of excitatory neural cells. The L-glutamate or phosphate uniporter activity is electrogenic and is driven by the proton electrochemical gradient, mainly by the electrical gradient established by the vacuolar H(+)-ATPase across the synaptic vesicle membrane. In addition, functions as a chloride channel that allows a chloride permeation through the synaptic vesicle membrane therefore affects the proton electrochemical gradient and promotes synaptic vesicles acidification. Moreover, functions as a vesicular K(+)/H(+) antiport allowing to maintain the electrical gradient and to decrease chemical gradient and therefore sustain vesicular glutamate uptake. The vesicular H(+)/H(+) antiport activity is electroneutral. At the plasma membrane, following exocytosis, functions as a symporter of Na(+) and phosphate from the extracellular space to the cytoplasm allowing synaptic phosphate homeostasis regulation. The symporter activity is driven by an inside negative membrane potential and is electrogenic. Also involved in the regulation of retinal hyaloid vessel regression during postnatal development. May also play a role in the endocrine glutamatergic system of other tissues such as pineal gland and pancreas. In Mus musculus (Mouse), this protein is Vesicular glutamate transporter 2.